The sequence spans 306 residues: D-alanine--D-alanine ligase (306 aa).

The region spanning 105–300 is the ATP-grasp domain; the sequence is KMIWQAAGIS…FDELVIQILE (196 aa). Residue 131–186 coordinates ATP; that stretch reads TDRLGLPLIIKPAREGSTIGLNKVDYAQDMQSAYQTAAQHDSLVIAEQFIQGIELT. Mg(2+)-binding residues include Asp-254, Glu-267, and Asn-269.

Belongs to the D-alanine--D-alanine ligase family. The cofactor is Mg(2+). Mn(2+) serves as cofactor.

Its subcellular location is the cytoplasm. The catalysed reaction is 2 D-alanine + ATP = D-alanyl-D-alanine + ADP + phosphate + H(+). It participates in cell wall biogenesis; peptidoglycan biosynthesis. Functionally, cell wall formation. This is D-alanine--D-alanine ligase from Nitrosomonas eutropha (strain DSM 101675 / C91 / Nm57).